Reading from the N-terminus, the 410-residue chain is Multifunctional CCA protein (410 aa).

ATP-binding residues include Gly-8 and Arg-11. 2 residues coordinate CTP: Gly-8 and Arg-11. Asp-21 and Asp-23 together coordinate Mg(2+). Arg-91, Arg-138, and Arg-141 together coordinate ATP. Residues Arg-91, Arg-138, and Arg-141 each contribute to the CTP site. The HD domain maps to 229-347 (TGIHQEMVSD…AQLALVCEAD (119 aa)).

Belongs to the tRNA nucleotidyltransferase/poly(A) polymerase family. Bacterial CCA-adding enzyme type 1 subfamily. As to quaternary structure, monomer. Can also form homodimers and oligomers. Mg(2+) is required as a cofactor. It depends on Ni(2+) as a cofactor.

The enzyme catalyses a tRNA precursor + 2 CTP + ATP = a tRNA with a 3' CCA end + 3 diphosphate. It carries out the reaction a tRNA with a 3' CCA end + 2 CTP + ATP = a tRNA with a 3' CCACCA end + 3 diphosphate. In terms of biological role, catalyzes the addition and repair of the essential 3'-terminal CCA sequence in tRNAs without using a nucleic acid template. Adds these three nucleotides in the order of C, C, and A to the tRNA nucleotide-73, using CTP and ATP as substrates and producing inorganic pyrophosphate. tRNA 3'-terminal CCA addition is required both for tRNA processing and repair. Also involved in tRNA surveillance by mediating tandem CCA addition to generate a CCACCA at the 3' terminus of unstable tRNAs. While stable tRNAs receive only 3'-terminal CCA, unstable tRNAs are marked with CCACCA and rapidly degraded. The protein is Multifunctional CCA protein of Xanthomonas oryzae pv. oryzae (strain MAFF 311018).